The primary structure comprises 518 residues: D-aminopeptidase (518 aa).

S62 functions as the Nucleophile in the catalytic mechanism. K65 serves as the catalytic Proton donor/acceptor. The tract at residues 373-392 is disordered; the sequence is FGTGPEKMDISGENEAQSSM. The segment at 477–487 is important for specificity; it reads QRSMDAPSPGE. D481 is a binding site for substrate.

Belongs to the peptidase S12 family. As to quaternary structure, homodimer.

The catalysed reaction is Release of an N-terminal D-amino acid from a peptide, Xaa-|-Yaa-, in which Xaa is preferably D-Ala, D-Ser or D-Thr. D-amino acid amides and methyl esters also are hydrolyzed, as is glycine amide.. Its activity is regulated as follows. Inhibited by beta-lactam compounds such as 6-aminopenicillic acid, 7-aminocephalosporanic acid, benzylpenicillin and ampicillin. Inhibited by p-chloromercuribenzoate. Functionally, hydrolyzes N-terminal residues in D-amino acid-containing peptides. This is D-aminopeptidase from Brucella melitensis biotype 1 (strain ATCC 23456 / CCUG 17765 / NCTC 10094 / 16M).